The following is a 193-amino-acid chain: Mediator of RNA polymerase II transcription subunit 11 (193 aa).

Residues 31–68 (AREIMQDLGKEKQISKNKMDDNANSFKKLITQVENELS) are a coiled coil. Positions 115–193 (IEPPTQEVDE…EEEEGEQMEN (79 aa)) are disordered. A compositionally biased stretch (acidic residues) spans 121–143 (EVDEDNEDEEDSGDADMLEETPE). The span at 150 to 175 (TTSSSATTSDGGSGGADDAASSSAPR) shows a compositional bias: low complexity. Acidic residues predominate over residues 184 to 193 (EEEEGEQMEN).

This sequence belongs to the Mediator complex subunit 11 family. In terms of assembly, component of the Mediator complex.

It is found in the nucleus. Component of the Mediator complex, a coactivator involved in the regulated transcription of nearly all RNA polymerase II-dependent genes. Mediator functions as a bridge to convey information from gene-specific regulatory proteins to the basal RNA polymerase II transcription machinery. Mediator is recruited to promoters by direct interactions with regulatory proteins and serves as a scaffold for the assembly of a functional pre-initiation complex with RNA polymerase II and the general transcription factors. This is Mediator of RNA polymerase II transcription subunit 11 (mdt-11) from Caenorhabditis briggsae.